We begin with the raw amino-acid sequence, 347 residues long: Phosphoribosylformylglycinamidine cyclo-ligase (347 aa).

The protein belongs to the AIR synthase family.

Its subcellular location is the cytoplasm. It catalyses the reaction 2-formamido-N(1)-(5-O-phospho-beta-D-ribosyl)acetamidine + ATP = 5-amino-1-(5-phospho-beta-D-ribosyl)imidazole + ADP + phosphate + H(+). The protein operates within purine metabolism; IMP biosynthesis via de novo pathway; 5-amino-1-(5-phospho-D-ribosyl)imidazole from N(2)-formyl-N(1)-(5-phospho-D-ribosyl)glycinamide: step 2/2. In Syntrophus aciditrophicus (strain SB), this protein is Phosphoribosylformylglycinamidine cyclo-ligase.